Consider the following 285-residue polypeptide: 4-hydroxybenzoate octaprenyltransferase (285 aa).

8 helical membrane-spanning segments follow: residues Leu-28–Phe-48, Ile-86–Ile-106, Asn-110–Phe-130, Phe-133–Phe-153, Val-160–Thr-180, Val-207–Met-227, Trp-232–Ile-252, and Ala-262–Ile-284.

The protein belongs to the UbiA prenyltransferase family. Mg(2+) serves as cofactor.

The protein resides in the cell inner membrane. The enzyme catalyses all-trans-octaprenyl diphosphate + 4-hydroxybenzoate = 4-hydroxy-3-(all-trans-octaprenyl)benzoate + diphosphate. The protein operates within cofactor biosynthesis; ubiquinone biosynthesis. Its function is as follows. Catalyzes the prenylation of para-hydroxybenzoate (PHB) with an all-trans polyprenyl group. Mediates the second step in the final reaction sequence of ubiquinone-8 (UQ-8) biosynthesis, which is the condensation of the polyisoprenoid side chain with PHB, generating the first membrane-bound Q intermediate 3-octaprenyl-4-hydroxybenzoate. The sequence is that of 4-hydroxybenzoate octaprenyltransferase from Cupriavidus pinatubonensis (strain JMP 134 / LMG 1197) (Cupriavidus necator (strain JMP 134)).